The sequence spans 543 residues: Chaperonin GroEL (543 aa).

Residues 29–32 (TVGP), 86–90 (DGTTT), glycine 413, and aspartate 504 contribute to the ATP site.

This sequence belongs to the chaperonin (HSP60) family. As to quaternary structure, forms a cylinder of 14 subunits composed of two heptameric rings stacked back-to-back. Interacts with the co-chaperonin GroES.

The protein localises to the cytoplasm. It carries out the reaction ATP + H2O + a folded polypeptide = ADP + phosphate + an unfolded polypeptide.. Together with its co-chaperonin GroES, plays an essential role in assisting protein folding. The GroEL-GroES system forms a nano-cage that allows encapsulation of the non-native substrate proteins and provides a physical environment optimized to promote and accelerate protein folding. In Mycoplasma genitalium (strain ATCC 33530 / DSM 19775 / NCTC 10195 / G37) (Mycoplasmoides genitalium), this protein is Chaperonin GroEL.